Here is a 672-residue protein sequence, read N- to C-terminus: DNA ligase (672 aa).

NAD(+) is bound by residues aspartate 32–aspartate 36, serine 81–leucine 82, and glutamate 114. The active-site N6-AMP-lysine intermediate is lysine 116. 4 residues coordinate NAD(+): arginine 137, glutamate 174, lysine 291, and lysine 315. Zn(2+) contacts are provided by cysteine 409, cysteine 412, cysteine 427, and cysteine 433. Residues valine 592–serine 672 form the BRCT domain.

The protein belongs to the NAD-dependent DNA ligase family. LigA subfamily. Requires Mg(2+) as cofactor. Mn(2+) serves as cofactor.

It catalyses the reaction NAD(+) + (deoxyribonucleotide)n-3'-hydroxyl + 5'-phospho-(deoxyribonucleotide)m = (deoxyribonucleotide)n+m + AMP + beta-nicotinamide D-nucleotide.. DNA ligase that catalyzes the formation of phosphodiester linkages between 5'-phosphoryl and 3'-hydroxyl groups in double-stranded DNA using NAD as a coenzyme and as the energy source for the reaction. It is essential for DNA replication and repair of damaged DNA. This is DNA ligase from Actinobacillus succinogenes (strain ATCC 55618 / DSM 22257 / CCUG 43843 / 130Z).